The chain runs to 519 residues: Berghepain-1 (519 aa).

Over 1 to 32 the chain is Cytoplasmic; it reads MINDIRRINITTSSIESLNENSKYLKRNHKRT. The chain crosses the membrane as a helical; Signal-anchor for type II membrane protein span at residues 33–53; sequence IKICAYAITTFALFFIVVVYF. Residues 54–519 lie on the Lumenal side of the membrane; the sequence is KNQTNVNDAN…IGIDVFFPIL (466 aa). N-linked (GlcNAc...) asparagine glycosylation is found at N55 and N143. Disulfide bonds link C298–C340, C333–C373, C358–C378, and C427–C508. The active site involves C301. Residue N432 is glycosylated (N-linked (GlcNAc...) asparagine). Catalysis depends on residues H433 and N483.

It belongs to the peptidase C1 family.

It is found in the membrane. Cysteine protease. Required for host hepatocyte-derived merozoite infectivity and to a lesser extent for host erythrocyte-derived merozoite infectivity. The protein is Berghepain-1 of Plasmodium berghei (strain Anka).